The chain runs to 639 residues: Testicular spindle-associated protein SHCBP1L (639 aa).

Disordered stretches follow at residues 1 to 25 (MESD…EQTV) and 48 to 75 (VASP…ETCD). S3 is subject to O-acetylserine. A phosphoserine mark is found at S8, S19, and S50. A compositionally biased stretch (basic residues) spans 54 to 63 (VKGKAARRRL). Residues 285–312 (IAQRFKKTLEKYKNKRVELIEYQSNIKE) are a coiled coil. PbH1 repeat units lie at residues 479–500 (SGHL…CVLT), 501–523 (GASL…ELYP), 524–557 (GSIA…NMKV), and 560–582 (APKL…SILQ). K556 is modified (N6-acetyllysine). K631 bears the N6-acetyllysine mark.

As to quaternary structure, interacts with HSPA2; this interaction may promote the recruitment of HSPA2 to the spindle. In terms of tissue distribution, expressed in pachytene spermatocytes and elongating spermatids inside the seminiferous tubules. Not detected in ovary (at protein level). Testis-specific.

Its subcellular location is the cytoplasm. It is found in the cytoskeleton. The protein resides in the spindle. Its function is as follows. Testis-specific spindle-associated factor that plays a role in spermatogenesis. In association with HSPA2, participates in the maintenance of spindle integrity during meiosis in male germ cells. This Mus musculus (Mouse) protein is Testicular spindle-associated protein SHCBP1L.